A 431-amino-acid polypeptide reads, in one-letter code: Asparagine--tRNA ligase 1 (431 aa).

Belongs to the class-II aminoacyl-tRNA synthetase family. As to quaternary structure, homodimer.

It localises to the cytoplasm. It catalyses the reaction tRNA(Asn) + L-asparagine + ATP = L-asparaginyl-tRNA(Asn) + AMP + diphosphate + H(+). The chain is Asparagine--tRNA ligase 1 (asnS1) from Lactiplantibacillus plantarum (strain ATCC BAA-793 / NCIMB 8826 / WCFS1) (Lactobacillus plantarum).